The sequence spans 335 residues: Lipase chaperone (335 aa).

Residues 1-21 (MSGSILLLPLAIALGLGFFIA) form a helical membrane-spanning segment.

This sequence belongs to the lipase chaperone family.

It is found in the cell inner membrane. In terms of biological role, may be involved in the folding of the extracellular lipase during its passage through the periplasm. This Stutzerimonas stutzeri (strain A1501) (Pseudomonas stutzeri) protein is Lipase chaperone.